We begin with the raw amino-acid sequence, 320 residues long: L-lactate dehydrogenase 1 (320 aa).

NAD(+) contacts are provided by residues Val18, Asp39, Arg44, Tyr69, and 83 to 84; that span reads GA. Positions 86 and 92 each coordinate substrate. Residues Ser105, 122-124, and Ser147 each bind NAD(+); that span reads AAN. 124-127 provides a ligand contact to substrate; the sequence is NPVD. 152 to 155 serves as a coordination point for substrate; the sequence is DSSR. His179 acts as the Proton acceptor in catalysis. Tyr223 is modified (phosphotyrosine). Substrate is bound at residue Thr232.

This sequence belongs to the LDH/MDH superfamily. LDH family. Homotetramer.

The protein resides in the cytoplasm. It catalyses the reaction (S)-lactate + NAD(+) = pyruvate + NADH + H(+). It participates in fermentation; pyruvate fermentation to lactate; (S)-lactate from pyruvate: step 1/1. Its function is as follows. Catalyzes the conversion of lactate to pyruvate. This is L-lactate dehydrogenase 1 from Lactiplantibacillus plantarum (strain ATCC BAA-793 / NCIMB 8826 / WCFS1) (Lactobacillus plantarum).